The following is a 288-amino-acid chain: Probable sulfate transport system permease protein cysT (288 aa).

The next 7 membrane-spanning stretches (helical) occupy residues 4–23 (LIFI…IRFL), 29–49 (VLAL…FILL), 79–99 (TAFL…WILV), 111–131 (AIVD…LMTV), 149–169 (IVFS…PFVV), 227–247 (SIVL…VLIF), and 257–277 (GAIV…LIIN). The 204-residue stretch at 73 to 276 (YATTFSTAFL…IASFGGLLII (204 aa)) folds into the ABC transmembrane type-1 domain.

It belongs to the binding-protein-dependent transport system permease family. CysTW subfamily.

The protein localises to the plastid. The protein resides in the chloroplast membrane. Functionally, part of the ABC transporter complex cysAWTP (TC 3.A.1.6.1) involved in sulfate/thiosulfate import. Probably responsible for the translocation of the substrate across the membrane. In Anthoceros angustus (Hornwort), this protein is Probable sulfate transport system permease protein cysT (cysT).